The sequence spans 250 residues: rRNA methyltransferase 2, mitochondrial (250 aa).

Residues 1–35 (MRLVFTGNCVFKRLLHTEIGGKYAKQQPRNLKGRS) constitute a mitochondrion transit peptide. Residues 90–93 (PGSW), aspartate 119, 136–137 (DF), and aspartate 161 each bind S-adenosyl-L-methionine. Lysine 201 acts as the Proton acceptor in catalysis.

Belongs to the class I-like SAM-binding methyltransferase superfamily. RNA methyltransferase RlmE family.

It is found in the mitochondrion. The enzyme catalyses a uridine in rRNA + S-adenosyl-L-methionine = a 2'-O-methyluridine in rRNA + S-adenosyl-L-homocysteine + H(+). Its function is as follows. S-adenosyl-L-methionine-dependent 2'-O-ribose methyltransferase that catalyzes the formation of 2'-O-methyluridine at position 1579 (Um1579) in the mitochondrial large subunit ribosomal RNA (mtLSU rRNA), a universally conserved modification in the peptidyl transferase domain of the mtLSU rRNA. This activity may require prior 2'-O-methylguanosine modification at position 1580 (Gm1580) by MRM3. Essential for late-stage assembly of mtLSU required for efficient translation of mitochondrial DNA encoded proteins; methyltransferase activity is not required for this function. Essential for mitochondrial respiratory function. The sequence is that of rRNA methyltransferase 2, mitochondrial from Drosophila melanogaster (Fruit fly).